Reading from the N-terminus, the 1663-residue chain is Complement C3 (1663 aa).

A signal peptide spans 1 to 24 (MGPASGSQLLVLLLLLASSPLALG). The residue at position 40 (serine 40) is a Phosphoserine. 13 cysteine pairs are disulfide-bonded: cysteine 559-cysteine 816, cysteine 626-cysteine 661, cysteine 693-cysteine 720, cysteine 694-cysteine 727, cysteine 707-cysteine 728, cysteine 873-cysteine 1513, cysteine 1101-cysteine 1158, cysteine 1358-cysteine 1489, cysteine 1389-cysteine 1458, cysteine 1506-cysteine 1511, cysteine 1518-cysteine 1590, cysteine 1537-cysteine 1661, and cysteine 1637-cysteine 1646. The residue at position 671 (serine 671) is a Phosphoserine. Residues 693 to 728 (CCEDGMRDIPMRYSCQRRARLITQGENCIKAFIDCC) enclose the Anaphylatoxin-like domain. N-linked (GlcNAc...) asparagine glycosylation is present at asparagine 939. At serine 968 the chain carries Phosphoserine. The segment at residues 1010 to 1013 (CGEQ) is a cross-link (isoglutamyl cysteine thioester (Cys-Gln)). The residue at position 1321 (serine 1321) is a Phosphoserine. An NTR domain is found at 1518 to 1661 (CFMQQSQEKI…FTESMVVYGC (144 aa)). Phosphoserine is present on serine 1573. Asparagine 1617 carries N-linked (GlcNAc...) asparagine glycosylation. Residues 1634-1659 (AEECQDQKYQKQCEELGAFTESMVVY) are interaction with CFP/properdin.

In terms of assembly, in absence of complement activation, the C3 precursor is first processed by the removal of 4 Arg residues, forming two chains, beta and alpha, linked by a disulfide bond. As to quaternary structure, complement C3b is composed of complement C3b and complement C3 beta chains that are associated via disulfide bonds. Non-enzymatic component of the C5 convertase, also named C4bC2bC3b, composed of the serine protease complement C2b (C2), complement C3b, as well as complement C4b (C4). Non-enzymatic component of the C5 convertase of the alternative complement pathways composed of the serine protease complement CFB and complement C3b. Interacts with CFP; interaction takes place together with CFB in the alternative complement system and allows the complex to become active. Interacts with CR1 (via Sushi 8 and Sushi 9 domains). Interacts with CFH. Interacts with CFH. Interacts with CR2. In terms of assembly, during pregnancy, C3dg exists as a complex (probably a 2:2:2 heterohexamer) with AGT and the proform of PRG2. Interacts with CR2 (via the N-terminal Sushi domains 1 and 2). Post-translationally, C3 precursor is first processed by the removal of 4 Arg residues, forming two chains, beta and alpha, linked by a disulfide bond. During activation of the complement systems, the alpha chain is cleaved into C3a and C3b by the C3 convertase: C3b stays linked to the beta chain, while C3a is released in the plasma. The alpha chain is cleaved by the serine protease complement C2b component of the C3 convertase to generate C3a and C3b following activation by the classical, lectin and GZMK complement systems. The alpha chain is cleaved by CFB component of the C3 convertase to generate C3a and C3b following activation by the alternative complement system. C3a is further processed by carboxypeptidases to release the C-terminal arginine residue generating the acylation stimulating protein (ASP). Levels of ASP are increased in adipocytes in the postprandial period and by insulin and dietary chylomicrons. In terms of processing, complement C3b is rapidly split in two positions by factor I (CFI) and a cofactor (CFH) to form iC3b (inactivated C3b) and C3f which is released. CFI and CFH catalyze proteolytic degradation of already-deposited complement C3b. Then iC3b is slowly cleaved (possibly by CFI) to form C3c (beta chain + alpha' chain fragment 1 + alpha' chain fragment 2), C3dg and C3f. Other proteases produce other fragments such as C3d or C3g. Post-translationally, upon activation, the internal thioester bond reacts with carbohydrate antigens on the target surface to form amide or ester bonds, leading to covalent association with the surface of pathogens. Complement C3b interacts with complement C4b via a thioester linkage. In terms of processing, phosphorylated by FAM20C in the extracellular medium.

Its subcellular location is the secreted. It localises to the cell surface. Its activity is regulated as follows. Complement activation is inhibited by VSIG4. Functionally, precursor of non-enzymatic components of the classical, alternative, lectin and GZMK complement pathways, which consist in a cascade of proteins that leads to phagocytosis and breakdown of pathogens and signaling that strengthens the adaptive immune system. In terms of biological role, non-enzymatic component of C5 convertase. Generated following cleavage by C3 convertase, it covalently attaches to the surface of pathogens, where it acts as an opsonin that marks the surface of antigens for removal. Complement C3b binds covalently via its reactive thioester, to cell surface carbohydrates or immune aggregates. Together with complement C4b, it then recruits the serine protease complement C2b to form the C5 convertase, which cleaves and activate C5, the next component of the complement pathways. In the alternative complement pathway, recruits the serine protease CFB to form the C5 convertase that cleaves and activates C5. Mediator of local inflammatory process released following cleavage by C3 convertase. Acts by binding to its receptor, C3AR1, activating G protein-coupled receptor signaling, promoting the phosphorylation, ARRB2-mediated internalization and endocytosis of C3AR1. C3a anaphylatoxin stimulates the activation of immune cells such as mast cells and basophilic leukocytes to release inflammation agents, such as cytokines, chemokines and histamine, which promote inflammation development. Also acts as potent chemoattractant for the migration of macrophages and neutrophils to the inflamed tissues, resulting in neutralization of the inflammatory triggers by multiple ways, such as phagocytosis and generation of reactive oxidants. Its function is as follows. Adipogenic hormone that stimulates triglyceride synthesis and glucose transport in adipocytes, regulating fat storage and playing a role in postprandial triglyceride clearance. Appears to stimulate triglyceride synthesis via activation of the PLC, MAPK and AKT signaling pathways. Acts by binding to its receptor, C5AR2, activating G protein-coupled receptor signaling, promoting the phosphorylation, ARRB2-mediated internalization and endocytosis of C5AR2. Functionally, acts as a chemoattractant for neutrophils in chronic inflammation. The sequence is that of Complement C3 from Mus musculus (Mouse).